A 486-amino-acid polypeptide reads, in one-letter code: tRNA-2-methylthio-N(6)-dimethylallyladenosine synthase (486 aa).

The MTTase N-terminal domain maps to 35 to 151 (RNLYVESYGC…LPRLLATVDS (117 aa)). Residues C44, C80, C114, C189, C193, and C196 each contribute to the [4Fe-4S] cluster site. Positions 175–419 (NSNGVSAFIS…IDKQRQHSFE (245 aa)) constitute a Radical SAM core domain. One can recognise a TRAM domain in the interval 422–485 (LKDIGKVYQV…TGTLLGEICT (64 aa)).

It belongs to the methylthiotransferase family. MiaB subfamily. Monomer. [4Fe-4S] cluster is required as a cofactor.

It localises to the cytoplasm. The catalysed reaction is N(6)-dimethylallyladenosine(37) in tRNA + (sulfur carrier)-SH + AH2 + 2 S-adenosyl-L-methionine = 2-methylsulfanyl-N(6)-dimethylallyladenosine(37) in tRNA + (sulfur carrier)-H + 5'-deoxyadenosine + L-methionine + A + S-adenosyl-L-homocysteine + 2 H(+). Its function is as follows. Catalyzes the methylthiolation of N6-(dimethylallyl)adenosine (i(6)A), leading to the formation of 2-methylthio-N6-(dimethylallyl)adenosine (ms(2)i(6)A) at position 37 in tRNAs that read codons beginning with uridine. This Amoebophilus asiaticus (strain 5a2) protein is tRNA-2-methylthio-N(6)-dimethylallyladenosine synthase.